We begin with the raw amino-acid sequence, 848 residues long: Dolabradiene synthase KSL4, chloroplastic (848 aa).

Residues 1-64 (MASLSFASSH…SRMPRNVDTH (64 aa)) constitute a chloroplast transit peptide. The disordered stretch occupies residues 148–168 (QRSDGSWGPDGGSGDHPSSPL). 5 residues coordinate Mg(2+): aspartate 597, aspartate 601, asparagine 742, serine 746, and glutamate 750. Positions 597–601 (DDLFD) match the DDXXD motif motif.

The protein belongs to the terpene synthase family. The cofactor is Mg(2+).

The protein localises to the plastid. It localises to the chloroplast. It catalyses the reaction ent-copalyl diphosphate = dolabradiene + diphosphate. Functionally, involved in the production of antifungal dolabralexin phytoalexins in response to biotic and abiotic stresses. In response to fungal infection and in associtation with AN2, is involved in the production dolabradiene, a type of antifungal phytoalexin. Converts ent-copalyl disphosphate (ent-CPP) to dolabradiene. The chain is Dolabradiene synthase KSL4, chloroplastic from Zea mays (Maize).